A 284-amino-acid polypeptide reads, in one-letter code: 2-dehydro-3-deoxyphosphooctonate aldolase (284 aa).

The protein belongs to the KdsA family.

The protein resides in the cytoplasm. The enzyme catalyses D-arabinose 5-phosphate + phosphoenolpyruvate + H2O = 3-deoxy-alpha-D-manno-2-octulosonate-8-phosphate + phosphate. It participates in carbohydrate biosynthesis; 3-deoxy-D-manno-octulosonate biosynthesis; 3-deoxy-D-manno-octulosonate from D-ribulose 5-phosphate: step 2/3. The protein operates within bacterial outer membrane biogenesis; lipopolysaccharide biosynthesis. The polypeptide is 2-dehydro-3-deoxyphosphooctonate aldolase (Haemophilus influenzae (strain 86-028NP)).